A 202-amino-acid polypeptide reads, in one-letter code: Shikimate kinase (202 aa).

20-25 (GSGKST) is a binding site for ATP. Residue serine 24 coordinates Mg(2+). Substrate is bound by residues aspartate 42, arginine 66, and glycine 88. Arginine 126 contacts ATP. A substrate-binding site is contributed by arginine 153.

It belongs to the shikimate kinase family. As to quaternary structure, monomer. Requires Mg(2+) as cofactor.

The protein localises to the cytoplasm. It carries out the reaction shikimate + ATP = 3-phosphoshikimate + ADP + H(+). It participates in metabolic intermediate biosynthesis; chorismate biosynthesis; chorismate from D-erythrose 4-phosphate and phosphoenolpyruvate: step 5/7. Functionally, catalyzes the specific phosphorylation of the 3-hydroxyl group of shikimic acid using ATP as a cosubstrate. The polypeptide is Shikimate kinase (Chlorobium luteolum (strain DSM 273 / BCRC 81028 / 2530) (Pelodictyon luteolum)).